The sequence spans 451 residues: Ammonium transporter Rh type B (451 aa).

Residues 1–11 lie on the Cytoplasmic side of the membrane; that stretch reads MADVSTSMRLK. The chain crosses the membrane as a helical span at residues 12–32; the sequence is LPVVCFILEIILIILFGALVQ. Residues 33–63 are Extracellular-facing; that stretch reads YDYETDAKEWHNQSHNDYENDFYFRYPSFQD. Asparagine 44 carries N-linked (GlcNAc...) asparagine glycosylation. Residues 64–84 traverse the membrane as a helical segment; the sequence is VHVMIFIGFGFLMTFLQKYGF. At 85 to 87 the chain is on the cytoplasmic side; the sequence is GSV. Residues 88–108 form a helical membrane-spanning segment; the sequence is GFNFLIAAFSLQWATLMQGFF. Residues 109-121 are Extracellular-facing; sequence HGMHGGKIHVGVE. Residues 122-142 traverse the membrane as a helical segment; the sequence is SMINADFCTGSVLISFGAVLG. Over 143 to 151 the chain is Cytoplasmic; the sequence is KTSPIQLLT. A helical membrane pass occupies residues 152 to 172; that stretch reads MAMFEVTLFAVNEFILLSLLG. Residues 173 to 176 lie on the Extracellular side of the membrane; the sequence is TRDA. Residues 177–197 form a helical membrane-spanning segment; that stretch reads GGSMTIHTFGAYFGLMVTRIL. Topologically, residues 198 to 216 are cytoplasmic; sequence YRPHLDKSKHRNSSVYHSD. The helical transmembrane segment at 217-237 threads the bilayer; it reads LFAMIGTIYLWMFWPSFNSAI. The Extracellular segment spans residues 238 to 247; that stretch reads TAHGDDQHRT. The helical transmembrane segment at 248 to 270 threads the bilayer; sequence ALNTYYSLAACTLATYGMSAVTS. Topologically, residues 271 to 274 are cytoplasmic; it reads HDGK. The helical transmembrane segment at 275–295 threads the bilayer; sequence LDMVHIQNAALAGGVAVGTAG. At 296–298 the chain is on the extracellular side; that stretch reads EMM. Residues 299–319 traverse the membrane as a helical segment; sequence LTPFGSMIVGFLAGIISVLGF. At 320–340 the chain is on the cytoplasmic side; it reads KFLSPILESKLKIQDTCGVHN. Residues 341-361 form a helical membrane-spanning segment; the sequence is LHGMPGVLGAIVGAVTAALAT. Topologically, residues 362–390 are extracellular; the sequence is MDVYGKGMEDVFPAVADGSIDASKQGGVQ. The chain crosses the membrane as a helical span at residues 391–411; it reads ALSLAITLGIALLGGLIVVFG. Residues 412–451 lie on the Cytoplasmic side of the membrane; that stretch reads TPPDTLCFEDGVYWEVPESEAPHEAQLTTVRTEETEKLSS.

It belongs to the ammonium transporter (TC 2.A.49) family. Rh subfamily.

It localises to the basolateral cell membrane. The protein resides in the cytoplasmic vesicle membrane. Functions as an ammonia transporter. May play a role in the elimination of ammonia in the gill. This Tetraodon nigroviridis (Spotted green pufferfish) protein is Ammonium transporter Rh type B (rhbg).